We begin with the raw amino-acid sequence, 247 residues long: DNA repair protein RecO (247 aa).

It belongs to the RecO family.

Involved in DNA repair and RecF pathway recombination. In Brucella abortus (strain 2308), this protein is DNA repair protein RecO.